The primary structure comprises 133 residues: ATP synthase epsilon chain (133 aa).

The protein belongs to the ATPase epsilon chain family. F-type ATPases have 2 components, CF(1) - the catalytic core - and CF(0) - the membrane proton channel. CF(1) has five subunits: alpha(3), beta(3), gamma(1), delta(1), epsilon(1). CF(0) has three main subunits: a, b and c.

It is found in the cell membrane. In terms of biological role, produces ATP from ADP in the presence of a proton gradient across the membrane. The chain is ATP synthase epsilon chain from Halalkalibacterium halodurans (strain ATCC BAA-125 / DSM 18197 / FERM 7344 / JCM 9153 / C-125) (Bacillus halodurans).